Consider the following 245-residue polypeptide: Geranylgeranylglyceryl phosphate synthase (245 aa).

2 residues coordinate Mg(2+): Asp22 and Ser51. Sn-glycerol 1-phosphate-binding positions include 169 to 175, 200 to 201, and 222 to 223; these read YLEAGSG, GG, and GT.

This sequence belongs to the GGGP/HepGP synthase family. Group II subfamily. Homopentamer. Mg(2+) serves as cofactor.

It is found in the cytoplasm. It carries out the reaction sn-glycerol 1-phosphate + (2E,6E,10E)-geranylgeranyl diphosphate = sn-3-O-(geranylgeranyl)glycerol 1-phosphate + diphosphate. It functions in the pathway membrane lipid metabolism; glycerophospholipid metabolism. Inhibited by EDTA in vitro. In terms of biological role, prenyltransferase that catalyzes the transfer of the geranylgeranyl moiety of geranylgeranyl diphosphate (GGPP) to the C3 hydroxyl of sn-glycerol-1-phosphate (G1P). This reaction is the first ether-bond-formation step in the biosynthesis of archaeal membrane lipids. Cannot use sn-glycerol-3-phosphate (G3P) or dihydroxyacetonephosphate (DHAP) as substrate. In Methanothermobacter marburgensis (strain ATCC BAA-927 / DSM 2133 / JCM 14651 / NBRC 100331 / OCM 82 / Marburg) (Methanobacterium thermoautotrophicum), this protein is Geranylgeranylglyceryl phosphate synthase.